Reading from the N-terminus, the 1236-residue chain is ATP-dependent helicase/nuclease subunit A (1236 aa).

A UvrD-like helicase ATP-binding domain is found at 2–457; sequence AHWTIEQEEA…VDLNKNFRSH (456 aa). Position 23–30 (23–30) interacts with ATP; it reads AAAGSGKT. Residues 515–816 enclose the UvrD-like helicase C-terminal domain; it reads NTAKRVEICI…RIMSIHKSKG (302 aa).

The protein belongs to the helicase family. AddA subfamily. Heterodimer of AddA and AddB/RexB. The cofactor is Mg(2+).

It carries out the reaction Couples ATP hydrolysis with the unwinding of duplex DNA by translocating in the 3'-5' direction.. The enzyme catalyses ATP + H2O = ADP + phosphate + H(+). Its function is as follows. The heterodimer acts as both an ATP-dependent DNA helicase and an ATP-dependent, dual-direction single-stranded exonuclease. Recognizes the chi site generating a DNA molecule suitable for the initiation of homologous recombination. The AddA nuclease domain is required for chi fragment generation; this subunit has the helicase and 3' -&gt; 5' nuclease activities. The polypeptide is ATP-dependent helicase/nuclease subunit A (Syntrophomonas wolfei subsp. wolfei (strain DSM 2245B / Goettingen)).